The following is a 1052-amino-acid chain: SWI/SNF-related matrix-associated actin-dependent regulator of chromatin subfamily A member 5 (1052 aa).

Residues methionine 1–serine 15 show a composition bias toward pro residues. Residues methionine 1–lysine 83 form a disordered region. An N-acetylserine modification is found at serine 2. The segment covering alanine 16 to aspartate 55 has biased composition (low complexity). Position 66 is a phosphoserine (serine 66). Positions lysine 69–lysine 83 are enriched in basic and acidic residues. Residue lysine 83 forms a Glycyl lysine isopeptide (Lys-Gly) (interchain with G-Cter in SUMO2) linkage. Position 113 is a phosphothreonine (threonine 113). Phosphoserine is present on residues serine 116, serine 137, and serine 171. Positions isoleucine 192–aspartate 357 constitute a Helicase ATP-binding domain. ATP is bound at residue aspartate 205–threonine 212. A DEAH box motif is present at residues aspartate 308–histidine 311. Position 440 is an N6-acetyllysine (lysine 440). Positions valine 487 to valine 638 constitute a Helicase C-terminal domain. Glycyl lysine isopeptide (Lys-Gly) (interchain with G-Cter in SUMO2) cross-links involve residues lysine 644, lysine 647, lysine 694, lysine 722, and lysine 735. Serine 755 and serine 825 each carry phosphoserine. SANT domains follow at residues glutamine 840–asparagine 892 and lysine 943–leucine 1007. Residue lysine 966 forms a Glycyl lysine isopeptide (Lys-Gly) (interchain with G-Cter in SUMO2) linkage. Positions leucine 1015 to leucine 1052 are disordered. Positions lysine 1023–lysine 1034 are enriched in basic residues. The span at arginine 1035–arginine 1044 shows a compositional bias: basic and acidic residues.

Belongs to the SNF2/RAD54 helicase family. ISWI subfamily. Component of the ACF-5 ISWI chromatin-remodeling complex (also called the ACF/WCRF complex) at least composed of SMARCA5/SNF2H and BAZ1A/ACF1, which regulates the spacing of histone octamers on the DNA template to facilitate access to DNA. Within the complex interacts with BAZ1A/ACF1; the interaction is direct and is required to slide nucleosomes from end to center positions on a DNA template in an ATP-dependent manner. Component of the CHRAC ISWI chromatin-remodeling complex at least composed of SMARCA5/SNF2H, BAZ1A/ACF1, CHRAC1 and POLE3; the complex preferentially binds DNA through the CHRAC1-POLE3 heterodimer and possesses ATP-dependent nucleosome-remodeling activity. Within the complex interacts with BAZ1A/ACF1; the interaction is direct and promotes the interaction with the POLE3-CHRAC1 heterodimer. Within the complex interacts with the POLE3-CHRAC1 heterodimer; the interaction is direct and enhances nucleosome sliding activity by the SMARCA5/SNF2H and BAZ1A/ACF1 interaction. Neither POLE3 nor CHRAC1 enhances nucleosome sliding activity of the ACF-5 ISWI chromatin remodeling complex. Component of the WICH-5 ISWI chromatin-remodeling complex (also called the WICH complex) at least composed of SMARCA5/SNF2H and BAZ1B/WSTF, which regulates the spacing of histone octamers on the DNA template to facilitate access to DNA. Within the complex interacts with BAZ1B/WSTF. Component of the NoRC-5 ISWI chromatin-remodeling complex (also called the NoRC chromatin-remodeling complex) at least composed of SMARCA5/SNF2H and BAZ2A/TIP5; the complex suppresses rDNA transcription by a combination of nucleosome remodeling, histone deacetylation, and DNA methylation. Within the complex interacts with BAZ2A/TIP5. Within the complex interacts with HDAC1. Component of the BRF-5 ISWI chromatin-remodeling complex at least composed of SMARCA5/SNF2H and BAZ2B. Within the complex interacts with BAZ2B. Component of the NURF-5 ISWI chromatin-remodeling complex at least composed of SMARCA5/SNF2H and BPTF. Within the complex interacts with BPFT. Component of the CERF-5 ISWI chromatin-remodeling complex at least composed of SMARCA5/SNF2H and CECR2. LUZP1 is detected as part of the CERF-5 complex in embryonic stem cells where it is involved in complex stabilization but is not detected in the complex in the testis. Within the complex interacts with CECR2. Component of the RSF-5 ISWI chromatin-remodeling complex (also called the RSF complex) at least composed of SMARCA5/SNF2H and RSF1. Within the complex interacts with RSF1. Interacts with the cohesin complex component RAD21; the interaction is direct. Interacts with the NuRD complex components HDAC2, RBBP4 and CHD4; the interactions are direct. Interacts with PCNA. Component of the B-WICH complex, at least composed of SMARCA5/SNF2H, BAZ1B/WSTF, SF3B1, DEK, MYO1C, ERCC6, MYBBP1A and DDX21 which positively regulates RNA polymerase III transcription. Interacts with MYO1C. Interacts with BEND3. Interacts with SIRT6; promoting recruitment to DNA damage sites. In terms of assembly, (Microbial infection) Interacts with JC virus small t antigen. As to quaternary structure, (Microbial infection) Interacts with Epstein Barr virus (EBV) lytic switch protein BZLF1; this interaction participates to the activation of early lytic viral genes by BZLF1. As to expression, ubiquitously expressed.

The protein resides in the nucleus. The protein localises to the chromosome. The catalysed reaction is ATP + H2O = ADP + phosphate + H(+). Its function is as follows. ATPase that possesses intrinsic ATP-dependent nucleosome-remodeling activity. Catalytic subunit of ISWI chromatin-remodeling complexes, which form ordered nucleosome arrays on chromatin and facilitate access to DNA during DNA-templated processes such as DNA replication, transcription, and repair; this may require intact histone H4 tails. Within the ISWI chromatin-remodeling complexes, slides edge- and center-positioned histone octamers away from their original location on the DNA template. Catalytic activity and histone octamer sliding propensity is regulated and determined by components of the ISWI chromatin-remodeling complexes. The BAZ1A/ACF1-, BAZ1B/WSTF-, BAZ2A/TIP5- and BAZ2B-containing ISWI chromatin-remodeling complexes regulate the spacing of nucleosomes along the chromatin and have the ability to slide mononucleosomes to the center of a DNA template in an ATP-dependent manner. The CECR2- and RSF1-containing ISWI chromatin-remodeling complexes do not have the ability to slide mononucleosomes to the center of a DNA template. Binds to core histones together with RSF1, and is required for the assembly of regular nucleosome arrays by the RSF-5 ISWI chromatin-remodeling complex. Involved in DNA replication and together with BAZ1A/ACF1 is required for replication of pericentric heterochromatin in S-phase. Probably plays a role in repression of RNA polymerase I dependent transcription of the rDNA locus, through the recruitment of the SIN3/HDAC1 corepressor complex to the rDNA promoter. Essential component of the WICH-5 ISWI chromatin-remodeling complex (also called the WICH complex), a chromatin-remodeling complex that mobilizes nucleosomes and reconfigures irregular chromatin to a regular nucleosomal array structure. The WICH-5 ISWI chromatin-remodeling complex regulates the transcription of various genes, has a role in RNA polymerase I transcription. Within the B-WICH complex has a role in RNA polymerase III transcription. Mediates the histone H2AX phosphorylation at 'Tyr-142', and is involved in the maintenance of chromatin structures during DNA replication processes. Essential component of NoRC-5 ISWI chromatin-remodeling complex, a complex that mediates silencing of a fraction of rDNA by recruiting histone-modifying enzymes and DNA methyltransferases, leading to heterochromatin formation and transcriptional silencing. The polypeptide is SWI/SNF-related matrix-associated actin-dependent regulator of chromatin subfamily A member 5 (Homo sapiens (Human)).